Consider the following 854-residue polypeptide: Arsenate respiratory reductase molybdopterin-containing subunit ArrA (854 aa).

The tat-type signal signal peptide spans 1-41; that stretch reads MKKENQVNLGRRQLLKSTAAGTVLTGIGGTLSFTPIVEGIA. One can recognise a 4Fe-4S Mo/W bis-MGD-type domain in the interval 54 to 110; it reads GEWLATTCQGCTSWCAKQIYVMDGRALKVRGNPNSGVHGMSSCPRQHLSLQQVYDPD. 4 residues coordinate [4Fe-4S] cluster: Cys-61, Cys-64, Cys-68, and Cys-96. Arg-165 lines the arsenite pocket. Arsenate is bound at residue Tyr-166. His-189 is a binding site for arsenite. Ser-190 contacts arsenate. Cys-193 is a Mo-bis(molybdopterin guanine dinucleotide) binding site. Lys-198 contacts arsenate. Residue Tyr-210 participates in arsenite binding.

This sequence belongs to the prokaryotic molybdopterin-containing oxidoreductase family. Heterodimer composed of one large subunit (ArrA) and one small subunit (ArrB). [4Fe-4S] cluster is required as a cofactor. Mo-bis(molybdopterin guanine dinucleotide) serves as cofactor. Predicted to be exported by the Tat system. The position of the signal peptide cleavage has not been experimentally proven.

Its subcellular location is the periplasm. It carries out the reaction arsenite + A + H2O = arsenate + AH2 + H(+). Phosphate is a competitive inhibitor. Functionally, component of the arsenate respiratory reductase (Arr) complex, which catalyzes the reduction of arsenate (As(V)) to arsenite (As(III)). ArrA is the arsenate-binding subunit. The periplasmic localization of this complex may allow the cell to couple arsenate reduction to energy production before arsenate can be transported to the cell cytoplasm and enter the ars detoxification pathway, an energy-requiring process. The protein is Arsenate respiratory reductase molybdopterin-containing subunit ArrA of Shewanella sp. (strain ANA-3).